The sequence spans 311 residues: Probable cell division protein WhiA (311 aa).

Positions 274-307 form a DNA-binding region, H-T-H motif; the sequence is SLKELGSLLTPPLTKSGVNHRFRKLELIAEKIRN.

It belongs to the WhiA family.

Its function is as follows. Involved in cell division and chromosome segregation. This is Probable cell division protein WhiA from Carboxydothermus hydrogenoformans (strain ATCC BAA-161 / DSM 6008 / Z-2901).